The sequence spans 595 residues: Adenine deaminase 2 (595 aa).

Belongs to the metallo-dependent hydrolases superfamily. Adenine deaminase family. Mn(2+) serves as cofactor.

The enzyme catalyses adenine + H2O + H(+) = hypoxanthine + NH4(+). This chain is Adenine deaminase 2, found in Rhizobium etli (strain ATCC 51251 / DSM 11541 / JCM 21823 / NBRC 15573 / CFN 42).